A 388-amino-acid polypeptide reads, in one-letter code: Succinate--CoA ligase [ADP-forming] subunit beta (388 aa).

The ATP-grasp domain occupies 9–245 (KELLASYGLP…KSQENERELK (237 aa)). Residues Lys46, 53–55 (GRG), Glu100, Tyr103, and Glu108 each bind ATP. Residues Asn200 and Asp214 each contribute to the Mg(2+) site. Substrate is bound by residues Asn265 and 322–324 (GIV).

This sequence belongs to the succinate/malate CoA ligase beta subunit family. In terms of assembly, heterotetramer of two alpha and two beta subunits. Mg(2+) is required as a cofactor.

The enzyme catalyses succinate + ATP + CoA = succinyl-CoA + ADP + phosphate. It carries out the reaction GTP + succinate + CoA = succinyl-CoA + GDP + phosphate. Its pathway is carbohydrate metabolism; tricarboxylic acid cycle; succinate from succinyl-CoA (ligase route): step 1/1. Succinyl-CoA synthetase functions in the citric acid cycle (TCA), coupling the hydrolysis of succinyl-CoA to the synthesis of either ATP or GTP and thus represents the only step of substrate-level phosphorylation in the TCA. The beta subunit provides nucleotide specificity of the enzyme and binds the substrate succinate, while the binding sites for coenzyme A and phosphate are found in the alpha subunit. This Neisseria meningitidis serogroup A / serotype 4A (strain DSM 15465 / Z2491) protein is Succinate--CoA ligase [ADP-forming] subunit beta.